Here is a 593-residue protein sequence, read N- to C-terminus: Tyrosine-protein phosphatase non-receptor type 9 (593 aa).

Residue Met-1 is modified to N-acetylmethionine. The interval 1 to 21 (MEPATAPRPDMAPELTPEEEQ) is disordered. In terms of domain architecture, CRAL-TRIO spans 84-243 (EEPLRSEILS…NLGGYIKIDL (160 aa)). The Tyrosine-protein phosphatase domain occupies 303–574 (IYEEYEDIRR…YFCYKAILEF (272 aa)). Substrate contacts are provided by residues Asp-470, 515–521 (CSAGIGR), and Gln-559. Cys-515 (phosphocysteine intermediate) is an active-site residue.

The protein belongs to the protein-tyrosine phosphatase family. Non-receptor class 3 subfamily.

The protein resides in the cytoplasm. The enzyme catalyses O-phospho-L-tyrosyl-[protein] + H2O = L-tyrosyl-[protein] + phosphate. Functionally, protein-tyrosine phosphatase that could participate in the transfer of hydrophobic ligands or in functions of the Golgi apparatus. The protein is Tyrosine-protein phosphatase non-receptor type 9 (Ptpn9) of Rattus norvegicus (Rat).